Here is a 236-residue protein sequence, read N- to C-terminus: MKSVSELLYHWLGESPVPYMEGWELQRQLHKRRVADQVPDTVLLLEHEPVYTAGKRTGPWDRPLTDPGAPVIDIDRGGKITWHGPGQLTAYPIVKLPAPLDVVAYVRMLEEAIIRVIGDFGLSGMRVEGRTGVWLAAAPDRGLPERKIAAIGCRIAKGVTMHGFALNCNNDLSWFDRIVPCGIRDAGVTSLTAELDRTVGVGDILEATEHHLAAVLGASSYRRIAGWPVLPEFVDA.

Residues 36 to 220 (DQVPDTVLLL…HLAAVLGASS (185 aa)) enclose the BPL/LPL catalytic domain. Residues 76-83 (RGGKITWH), 150-152 (AIG), and 163-165 (GFA) each bind substrate. Cys-181 acts as the Acyl-thioester intermediate in catalysis.

Belongs to the LipB family.

The protein resides in the cytoplasm. The enzyme catalyses octanoyl-[ACP] + L-lysyl-[protein] = N(6)-octanoyl-L-lysyl-[protein] + holo-[ACP] + H(+). Its pathway is protein modification; protein lipoylation via endogenous pathway; protein N(6)-(lipoyl)lysine from octanoyl-[acyl-carrier-protein]: step 1/2. Catalyzes the transfer of endogenously produced octanoic acid from octanoyl-acyl-carrier-protein onto the lipoyl domains of lipoate-dependent enzymes. Lipoyl-ACP can also act as a substrate although octanoyl-ACP is likely to be the physiological substrate. This chain is Octanoyltransferase, found in Thermobifida fusca (strain YX).